The sequence spans 242 residues: Copper transport protein B (242 aa).

2 consecutive transmembrane segments (helical) span residues 8–28 and 86–106; these read ICLC…ACVL and ITGP…TAGY. The segment at 153–175 is disordered; that stretch reads ESATTNVPSSQTPNESSPLVAGR. The span at 154–169 shows a compositional bias: polar residues; sequence SATTNVPSSQTPNESS. 2 consecutive transmembrane segments (helical) span residues 187–207 and 210–230; these read IILA…MLLF and YNGF…LVFG.

It belongs to the copper transporter (Ctr) (TC 1.A.56) family. SLC31A subfamily.

Its subcellular location is the membrane. Functionally, transporter that is probably involved in the transport of copper, even if it does not act as a major copper transporter. The sequence is that of Copper transport protein B from Aspergillus fumigatus (strain ATCC MYA-4609 / CBS 101355 / FGSC A1100 / Af293) (Neosartorya fumigata).